The primary structure comprises 61 residues: DNA-directed RNA polymerase subunit Rpo6 (61 aa).

It belongs to the archaeal Rpo6/eukaryotic RPB6 RNA polymerase subunit family. In terms of assembly, part of the RNA polymerase complex.

It is found in the cytoplasm. It carries out the reaction RNA(n) + a ribonucleoside 5'-triphosphate = RNA(n+1) + diphosphate. DNA-dependent RNA polymerase (RNAP) catalyzes the transcription of DNA into RNA using the four ribonucleoside triphosphates as substrates. The chain is DNA-directed RNA polymerase subunit Rpo6 from Thermoplasma volcanium (strain ATCC 51530 / DSM 4299 / JCM 9571 / NBRC 15438 / GSS1).